The sequence spans 60 residues: Mastoparan-A (60 aa).

The first 27 residues, 1-27, serve as a signal peptide directing secretion; it reads MKNTILILFTAFIALLGFFGMSAEALA. AXPX repeat units follow at residues 27–30, 31–34, 35–38, and 41–43; these read ADPI, ADPL, AGPN, and ADP. Residues 28-45 constitute a propeptide that is removed on maturation; the sequence is DPIADPLAGPNAEADPEA. Position 59 is an isoleucine amide (Ile-59).

It belongs to the MCD family. Mastoparan subfamily. Expressed by the venom gland.

Its subcellular location is the secreted. It localises to the target cell membrane. Its function is as follows. Antimicrobial and mast cell degranulating peptide. Has broad spectrum antibacterial activity against both Gram-positive and Gram-negative bacteria (S.aureus MIC=32-64 ug/ml, S.xylosus MIC=2 ug/ml, S.alactolyticus MIC=12 ug/ml, C.koseri MIC=4 ug/ml, E.coli MIC=8 ug/ml, K.pneumoniae MIC=32 ug/ml, P.aerugiosa MIC=192 ug/ml, S.choleraesuis MIC=32 ug/ml, S.typhimurium MIC=32 ug/ml, V.parahamelytics MIC=16 ug/ml). Affects membrane permeability of E.coli. Shows hemolytic activities on sheep, chicken and human erythrocytes. Its mast cell degranulation activity may be related to the activation of G-protein coupled receptors in mast cells as well as interaction with other proteins located in cell endosomal membranes in the mast cells. The sequence is that of Mastoparan-A from Vespa analis (Yellow-vented hornet).